A 219-amino-acid chain; its full sequence is RNA chaperone ProQ (219 aa).

Residues threonine 102–alanine 160 are disordered. Basic and acidic residues-rich tracts occupy residues glutamate 105 to proline 129 and alanine 140 to lysine 153.

It belongs to the ProQ family.

The protein resides in the cytoplasm. Functionally, RNA chaperone with significant RNA binding, RNA strand exchange and RNA duplexing activities. The polypeptide is RNA chaperone ProQ (Shewanella amazonensis (strain ATCC BAA-1098 / SB2B)).